A 438-amino-acid chain; its full sequence is Phosphoribosylamine--glycine ligase (438 aa).

An ATP-grasp domain is found at 108–316 (RTFMERNEIP…LLEVAEGIVD (209 aa)). 135 to 194 (VDDFGRPVVVKPIGLTGGKGVKVVGYQLRDNEEAKSYAEELIRRDGRVLIEERTNGVEFT) provides a ligand contact to ATP. 3 residues coordinate Mg(2+): glutamine 274, glutamate 286, and asparagine 288. 3 residues coordinate Mn(2+): glutamine 274, glutamate 286, and asparagine 288.

The protein belongs to the GARS family. The cofactor is Mg(2+). It depends on Mn(2+) as a cofactor.

The enzyme catalyses 5-phospho-beta-D-ribosylamine + glycine + ATP = N(1)-(5-phospho-beta-D-ribosyl)glycinamide + ADP + phosphate + H(+). It participates in purine metabolism; IMP biosynthesis via de novo pathway; N(1)-(5-phospho-D-ribosyl)glycinamide from 5-phospho-alpha-D-ribose 1-diphosphate: step 2/2. This is Phosphoribosylamine--glycine ligase from Thermococcus gammatolerans (strain DSM 15229 / JCM 11827 / EJ3).